We begin with the raw amino-acid sequence, 1377 residues long: DNA-directed RNA polymerase subunit beta (1377 aa).

It belongs to the RNA polymerase beta chain family. In terms of assembly, the RNAP catalytic core consists of 2 alpha, 1 beta, 1 beta' and 1 omega subunit. When a sigma factor is associated with the core the holoenzyme is formed, which can initiate transcription.

It catalyses the reaction RNA(n) + a ribonucleoside 5'-triphosphate = RNA(n+1) + diphosphate. Its function is as follows. DNA-dependent RNA polymerase catalyzes the transcription of DNA into RNA using the four ribonucleoside triphosphates as substrates. The polypeptide is DNA-directed RNA polymerase subunit beta (Brucella suis biovar 1 (strain 1330)).